A 235-amino-acid polypeptide reads, in one-letter code: LexA repressor (235 aa).

Positions 26-46 form a DNA-binding region, H-T-H motif; the sequence is FDEMKDALDLKSKSGIHRLIT. Catalysis depends on for autocatalytic cleavage activity residues serine 156 and lysine 194.

This sequence belongs to the peptidase S24 family. In terms of assembly, homodimer.

The catalysed reaction is Hydrolysis of Ala-|-Gly bond in repressor LexA.. Its function is as follows. Represses a number of genes involved in the response to DNA damage (SOS response), including recA and lexA. In the presence of single-stranded DNA, RecA interacts with LexA causing an autocatalytic cleavage which disrupts the DNA-binding part of LexA, leading to derepression of the SOS regulon and eventually DNA repair. The polypeptide is LexA repressor (Paramagnetospirillum magneticum (strain ATCC 700264 / AMB-1) (Magnetospirillum magneticum)).